Reading from the N-terminus, the 411-residue chain is LL-diaminopimelate aminotransferase (411 aa).

Substrate is bound by residues Y15 and G42. Residues Y72, 108-109 (SK), Y132, N187, Y218, and 246-248 (SFS) contribute to the pyridoxal 5'-phosphate site. The substrate site is built by K109, Y132, and N187. Residue K249 is modified to N6-(pyridoxal phosphate)lysine. Residues R257 and N292 each coordinate pyridoxal 5'-phosphate. The substrate site is built by N292 and R388.

It belongs to the class-I pyridoxal-phosphate-dependent aminotransferase family. LL-diaminopimelate aminotransferase subfamily. Homodimer. Pyridoxal 5'-phosphate serves as cofactor.

The enzyme catalyses (2S,6S)-2,6-diaminopimelate + 2-oxoglutarate = (S)-2,3,4,5-tetrahydrodipicolinate + L-glutamate + H2O + H(+). Its pathway is amino-acid biosynthesis; L-lysine biosynthesis via DAP pathway; LL-2,6-diaminopimelate from (S)-tetrahydrodipicolinate (aminotransferase route): step 1/1. In terms of biological role, involved in the synthesis of meso-diaminopimelate (m-DAP or DL-DAP), required for both lysine and peptidoglycan biosynthesis. Catalyzes the direct conversion of tetrahydrodipicolinate to LL-diaminopimelate. The protein is LL-diaminopimelate aminotransferase of Trichodesmium erythraeum (strain IMS101).